Reading from the N-terminus, the 390-residue chain is Transforming growth factor beta-1 proprotein (390 aa).

An N-terminal signal peptide occupies residues Met1–Gly29. The segment at Leu30–Pro74 is straightjacket domain. The segment at Glu75–Leu271 is arm domain. Asn82, Asn136, and Asn176 each carry an N-linked (GlcNAc...) asparagine glycan. Residues Asp226–Gly252 form a bowtie tail region. The Cell attachment site motif lies at Arg244–Asp246. 4 disulfides stabilise this stretch: Cys285–Cys294, Cys293–Cys356, Cys322–Cys387, and Cys326–Cys389.

This sequence belongs to the TGF-beta family. Homodimer; disulfide-linked. Interacts with the serine proteases, HTRA1 and HTRA3: the interaction with either inhibits TGFB1-mediated signaling and the HTRA protease activity is required for this inhibition. May interact with THSD4; this interaction may lead to sequestration by FBN1 microfibril assembly and attenuation of TGFB signaling. Interacts with CD109, DPT and ASPN. Interacts with EFEMP2. Interacts with TSKU; the interaction contributes to regulation of the hair cycle. Interacts with TGFBR3. In terms of assembly, homodimer; disulfide-linked. Interacts with transforming growth factor beta-1 (TGF-beta-1) chain; interaction is non-covalent and maintains TGF-beta-1 in a latent state; each latency-associated peptide (LAP) monomer interacts with TGF-beta-1 in the other monomer. Interacts with LTBP1; leading to regulation of TGF-beta-1 activation. Interacts with LRRC32/GARP; leading to regulation of TGF-beta-1 activation on the surface of activated regulatory T-cells (Tregs). Interacts with LRRC33/NRROS; leading to regulation of TGF-beta-1 activation in macrophages and microglia. Interacts (via cell attachment site) with integrins ITGAV and ITGB6 (ITGAV:ITGB6), leading to release of the active TGF-beta-1. Interacts with NREP; the interaction results in a decrease in TGFB1 autoinduction. Interacts with HSP90AB1; inhibits latent TGFB1 activation. As to quaternary structure, homodimer; disulfide-linked. Interacts with TGF-beta receptors (TGFBR1 and TGFBR2), leading to signal transduction. Post-translationally, transforming growth factor beta-1 proprotein: The precursor proprotein is cleaved in the Golgi apparatus by FURIN to form Transforming growth factor beta-1 (TGF-beta-1) and Latency-associated peptide (LAP) chains, which remain non-covalently linked, rendering TGF-beta-1 inactive. N-glycosylated. Deglycosylation leads to activation of Transforming growth factor beta-1 (TGF-beta-1); mechanisms triggering deglycosylation-driven activation of TGF-beta-1 are however unclear.

It localises to the secreted. The protein localises to the extracellular space. It is found in the extracellular matrix. Its function is as follows. Transforming growth factor beta-1 proprotein: Precursor of the Latency-associated peptide (LAP) and Transforming growth factor beta-1 (TGF-beta-1) chains, which constitute the regulatory and active subunit of TGF-beta-1, respectively. Required to maintain the Transforming growth factor beta-1 (TGF-beta-1) chain in a latent state during storage in extracellular matrix. Associates non-covalently with TGF-beta-1 and regulates its activation via interaction with 'milieu molecules', such as LTBP1, LRRC32/GARP and LRRC33/NRROS, that control activation of TGF-beta-1. Interaction with LRRC33/NRROS regulates activation of TGF-beta-1 in macrophages and microglia. Interaction with LRRC32/GARP controls activation of TGF-beta-1 on the surface of activated regulatory T-cells (Tregs). Interaction with integrins (ITGAV:ITGB6 or ITGAV:ITGB8) results in distortion of the Latency-associated peptide chain and subsequent release of the active TGF-beta-1. In terms of biological role, multifunctional protein that regulates the growth and differentiation of various cell types and is involved in various processes, such as normal development, immune function, microglia function and responses to neurodegeneration. Activation into mature form follows different steps: following cleavage of the proprotein in the Golgi apparatus, Latency-associated peptide (LAP) and Transforming growth factor beta-1 (TGF-beta-1) chains remain non-covalently linked rendering TGF-beta-1 inactive during storage in extracellular matrix. At the same time, LAP chain interacts with 'milieu molecules', such as LTBP1, LRRC32/GARP and LRRC33/NRROS that control activation of TGF-beta-1 and maintain it in a latent state during storage in extracellular milieus. TGF-beta-1 is released from LAP by integrins (ITGAV:ITGB6 or ITGAV:ITGB8): integrin-binding to LAP stabilizes an alternative conformation of the LAP bowtie tail and results in distortion of the LAP chain and subsequent release of the active TGF-beta-1. Once activated following release of LAP, TGF-beta-1 acts by binding to TGF-beta receptors (TGFBR1 and TGFBR2), which transduce signal. While expressed by many cells types, TGF-beta-1 only has a very localized range of action within cell environment thanks to fine regulation of its activation by Latency-associated peptide chain (LAP) and 'milieu molecules'. Plays an important role in bone remodeling: acts as a potent stimulator of osteoblastic bone formation, causing chemotaxis, proliferation and differentiation in committed osteoblasts. Can promote either T-helper 17 cells (Th17) or regulatory T-cells (Treg) lineage differentiation in a concentration-dependent manner. At high concentrations, leads to FOXP3-mediated suppression of RORC and down-regulation of IL-17 expression, favoring Treg cell development. At low concentrations in concert with IL-6 and IL-21, leads to expression of the IL-17 and IL-23 receptors, favoring differentiation to Th17 cells. Stimulates sustained production of collagen through the activation of CREB3L1 by regulated intramembrane proteolysis (RIP). Mediates SMAD2/3 activation by inducing its phosphorylation and subsequent translocation to the nucleus. Positively regulates odontoblastic differentiation in dental papilla cells, via promotion of IPO7-mediated translocation of phosphorylated SMAD2 to the nucleus and subsequent transcription of target genes. Can induce epithelial-to-mesenchymal transition (EMT) and cell migration in various cell types. This chain is Transforming growth factor beta-1 proprotein (TGFB1), found in Mustela putorius furo (European domestic ferret).